The following is a 321-amino-acid chain: MSNDGKKVKSLSDLSGVGQNILNKLVEAGYSSLEAVAVATPQDLSVAAGIPQTTAQRIIKEAREALDIRFKTALEVKKERMNTKKITTGSQALDGLLGGGIETRTMTEFFGEFGSGKTQLCHQISISVQLPQEKGGLNGKAVYIDTEGTFRWERIEAMAKGAGLESDIAMNNIYYMRAINSDHQMAIVDDLQELITKDPAIKLIIVDSITSHFRAEYPGRENLAVRQQKLNKHLHQLVRLAEMYDIAVIITNQVMARPDMFYGDPTTAVGGHTLYHVPGIRVQLKKSRGNKRIARIVDAPHLPEGEVVFAITEEGVRDAEE.

Residue 111 to 118 (GEFGSGKT) participates in ATP binding.

It belongs to the eukaryotic RecA-like protein family.

In terms of biological role, involved in DNA repair and in homologous recombination. Binds and assemble on single-stranded DNA to form a nucleoprotein filament. Hydrolyzes ATP in a ssDNA-dependent manner and promotes DNA strand exchange between homologous DNA molecules. In Sulfolobus acidocaldarius (strain ATCC 33909 / DSM 639 / JCM 8929 / NBRC 15157 / NCIMB 11770), this protein is DNA repair and recombination protein RadA.